The chain runs to 151 residues: 3-hydroxyacyl-[acyl-carrier-protein] dehydratase FabZ (151 aa).

Histidine 57 is a catalytic residue.

This sequence belongs to the thioester dehydratase family. FabZ subfamily.

The protein resides in the cytoplasm. The catalysed reaction is a (3R)-hydroxyacyl-[ACP] = a (2E)-enoyl-[ACP] + H2O. Involved in unsaturated fatty acids biosynthesis. Catalyzes the dehydration of short chain beta-hydroxyacyl-ACPs and long chain saturated and unsaturated beta-hydroxyacyl-ACPs. The sequence is that of 3-hydroxyacyl-[acyl-carrier-protein] dehydratase FabZ from Tolumonas auensis (strain DSM 9187 / NBRC 110442 / TA 4).